The chain runs to 379 residues: Cytochrome b (379 aa).

The next 4 membrane-spanning stretches (helical) occupy residues 33-53 (FGSL…FLAM), 77-98 (WLIR…FIHV), 113-133 (WNIG…GYVL), and 178-198 (FFAF…VHLL). Heme b is bound by residues H83 and H97. 2 residues coordinate heme b: H182 and H196. Residue H201 coordinates a ubiquinone. 4 consecutive transmembrane segments (helical) span residues 226-246 (TKDL…VLFF), 288-308 (LGGV…PLLN), 320-340 (VTQV…WIGG), and 347-367 (FTTI…ILIP).

It belongs to the cytochrome b family. In terms of assembly, the cytochrome bc1 complex contains 11 subunits: 3 respiratory subunits (MT-CYB, CYC1 and UQCRFS1), 2 core proteins (UQCRC1 and UQCRC2) and 6 low-molecular weight proteins (UQCRH/QCR6, UQCRB/QCR7, UQCRQ/QCR8, UQCR10/QCR9, UQCR11/QCR10 and a cleavage product of UQCRFS1). This cytochrome bc1 complex then forms a dimer. The cofactor is heme b.

The protein resides in the mitochondrion inner membrane. In terms of biological role, component of the ubiquinol-cytochrome c reductase complex (complex III or cytochrome b-c1 complex) that is part of the mitochondrial respiratory chain. The b-c1 complex mediates electron transfer from ubiquinol to cytochrome c. Contributes to the generation of a proton gradient across the mitochondrial membrane that is then used for ATP synthesis. In Akodon cursor (Cursor grass mouse), this protein is Cytochrome b (MT-CYB).